Consider the following 122-residue polypeptide: Large ribosomal subunit protein bL12 (122 aa).

The interval Gly-94 to Lys-122 is disordered. Residues Gly-99–Glu-114 are compositionally biased toward basic and acidic residues.

It belongs to the bacterial ribosomal protein bL12 family. Homodimer. Part of the ribosomal stalk of the 50S ribosomal subunit. Forms a multimeric L10(L12)X complex, where L10 forms an elongated spine to which 2 to 4 L12 dimers bind in a sequential fashion. Binds GTP-bound translation factors.

Its function is as follows. Forms part of the ribosomal stalk which helps the ribosome interact with GTP-bound translation factors. Is thus essential for accurate translation. In Halanaerobium praevalens, this protein is Large ribosomal subunit protein bL12.